Here is a 172-residue protein sequence, read N- to C-terminus: Large ribosomal subunit protein uL10 (172 aa).

This sequence belongs to the universal ribosomal protein uL10 family. As to quaternary structure, part of the ribosomal stalk of the 50S ribosomal subunit. The N-terminus interacts with L11 and the large rRNA to form the base of the stalk. The C-terminus forms an elongated spine to which L12 dimers bind in a sequential fashion forming a multimeric L10(L12)X complex.

Forms part of the ribosomal stalk, playing a central role in the interaction of the ribosome with GTP-bound translation factors. This Methylobacterium radiotolerans (strain ATCC 27329 / DSM 1819 / JCM 2831 / NBRC 15690 / NCIMB 10815 / 0-1) protein is Large ribosomal subunit protein uL10.